The sequence spans 328 residues: Transcription factor bHLH84 (328 aa).

The tract at residues 145–248 (QCESSKKRTR…ASRGAATDPQ (104 aa)) is disordered. The span at 220 to 229 (LSKEDGEDSK) shows a compositional bias: basic and acidic residues. A bHLH domain is found at 243–292 (AATDPQSLYARKRRERINERLRILQHLVPNGTKVDISTMLEEAVQYVKFL).

It belongs to the bHLH protein family. In terms of assembly, homodimer.

It localises to the nucleus. This chain is Transcription factor bHLH84 (BHLH84), found in Arabidopsis thaliana (Mouse-ear cress).